The chain runs to 319 residues: Myoblast determination protein 1 (319 aa).

Met1 participates in a covalent cross-link: Peptide (Met-Gly) (interchain with G-Cter in ubiquitin). An N6-methyllysine; by EHMT2 modification is found at Lys104. Residues 109-160 (DRRKAATMRERRRLSKVNEAFETLKRCTSSNPNQRLPKVEILRNAIRYIEGL) enclose the bHLH domain. Disordered stretches follow at residues 174–222 (AAAA…GARR) and 267–319 (PALL…YQVL). Residues 197–207 (SDASSPRSNCS) are compositionally biased toward polar residues. A compositionally biased stretch (low complexity) spans 267 to 276 (PALLLADAPP).

In terms of assembly, efficient DNA binding requires dimerization with another bHLH protein. Seems to form active heterodimers with ITF-2. Interacts with SUV39H1. Interacts with DDX5. Interacts with CHD2. Interacts with TSC22D3. Interacts with SETD3. Interacts with P-TEFB complex; promotes the transcriptional activity of MYOD1 through its CDK9-mediated phosphorylation. Interacts with CSRP3. Interacts with NUPR1. Phosphorylated by CDK9. This phosphorylation promotes its function in muscle differentiation. Post-translationally, acetylated by a complex containing EP300 and PCAF. The acetylation is essential to activate target genes. Conversely, its deacetylation by SIRT1 inhibits its function. In terms of processing, ubiquitinated on the N-terminus; which is required for proteasomal degradation. Methylation at Lys-104 by EHMT2/G9a inhibits myogenic activity.

The protein resides in the nucleus. Acts as a transcriptional activator that promotes transcription of muscle-specific target genes and plays a role in muscle differentiation. Together with MYF5 and MYOG, co-occupies muscle-specific gene promoter core region during myogenesis. Induces fibroblasts to differentiate into myoblasts. Interacts with and is inhibited by the twist protein. This interaction probably involves the basic domains of both proteins. The chain is Myoblast determination protein 1 (MYOD1) from Ovis aries (Sheep).